Here is a 2344-residue protein sequence, read N- to C-terminus: Genome polyprotein (2344 aa).

Residues 492-653 enclose the SF3 helicase domain; that stretch reads QKVISDLHTM…ESWQATRHGS (162 aa). 522-529 lines the ATP pocket; sequence GAPGIGKT. Residue Y1014 is modified to O-(5'-phospho-RNA)-tyrosine. Y1014 carries the post-translational modification O-UMP-tyrosine; transient. The region spanning 1109-1244 is the Peptidase C24 domain; sequence GLPGFMRHNG…SKMCTLIDLT (136 aa). Active-site for 3CLpro activity residues include H1135, D1152, and C1212. Residues 1495-1619 form the RdRp catalytic domain; that stretch reads SDFLCLDYSK…AMTPMMVSLL (125 aa). C1584 and C1591 are oxidised to a cystine. Positions 1771 to 1794 are disordered; it reads RTAPQGEAAGTATTASVPGTTTDG. Low complexity predominate over residues 1778–1794; the sequence is AAGTATTASVPGTTTDG.

Homodimer. As to quaternary structure, homomultimer. Interacts with host type II histo-blood group structures antigens at the surface of target cells. The cofactor is Mn(2+). Post-translationally, specific enzymatic cleavages by its own cysteine protease yield mature proteins. The protease cleaves itself from the nascent polyprotein autocatalytically. Precursor p41 can be cleaved by viral 3CLpro into protein p19 and VPg, or cleaved by host protease into protein p23/2 and protein p18. VPg is uridylylated by the polymerase and is covalently attached to the 5'-end of the polyadenylated genomic and subgenomic RNAs. This uridylylated form acts as a nucleotide-peptide primer for the polymerase.

It localises to the host cytoplasm. Its subcellular location is the host endoplasmic reticulum. The protein resides in the virion. The enzyme catalyses a ribonucleoside 5'-triphosphate + H2O = a ribonucleoside 5'-diphosphate + phosphate + H(+). It carries out the reaction Endopeptidase with a preference for cleavage when the P1 position is occupied by Glu-|-Xaa and the P1' position is occupied by Gly-|-Yaa.. It catalyses the reaction RNA(n) + a ribonucleoside 5'-triphosphate = RNA(n+1) + diphosphate. Functionally, together with NTPase and NS4, initiates the formation of the replication complex. Induces the proliferation of the host smooth ER membranes forming long tubular structures. These remodeled membranes probably form the viral factories that contain the replication complex. In terms of biological role, displays NTPase activity, but no helicase activity. Induces the formation of convoluted membranes derived from the host ER. These remodeled membranes probably form the viral factories that contain the replication complex. Together with NS2 and NS4, initiates the formation of the replication complex. Probable key protein responsible for the formation of membrane alterations by the virus. Induces the formation of convoluted membranes derived from the host ER. These remodeled membranes probably form the viral factories that contain the replication complex. Together with NS2 and NTPase, initiates the formation of the replication complex. Its function is as follows. Viral genome-linked protein is covalently linked to the 5'-end of the positive-strand, negative-strand genomic RNAs and subgenomic RNA. Acts as a genome-linked replication primer. May recruit ribosome to viral RNA thereby promoting viral proteins translation. Interacts with host translation initiation complex to allow the translation of viral proteins. Functionally, processes the polyprotein. 3CLpro-RdRp is first released by autocleavage, then all other proteins are cleaved. May cleave polyadenylate-binding protein thereby inhibiting cellular translation. In terms of biological role, replicates genomic and antigenomic RNA by recognizing replications specific signals. Also transcribes a subgenomic mRNA by initiating RNA synthesis internally on antigenomic RNA. This sgRNA codes for structural proteins. Catalyzes the covalent attachment VPg with viral RNAs. Capsid protein VP60 self assembles to form an icosahedral capsid with a T=3 symmetry, about 35 nm in diameter, and consisting of 180 capsid proteins. A smaller form of capsid with a diameter of 23 nm might be capsid proteins assembled as icosahedron with T=1 symmetry. The capsid encapsulate VP2 proteins and genomic or subgenomic RNA. Attaches virion to target cells by binding histo-blood group antigens, inducing endocytosis of the viral particle. Acidification of the endosome induces conformational change of capsid protein thereby injecting virus genomic RNA into host cytoplasm. This Oryctolagus cuniculus (Rabbit) protein is Genome polyprotein.